We begin with the raw amino-acid sequence, 139 residues long: Nucleoside diphosphate kinase (139 aa).

Residues Lys-10, Phe-58, Arg-86, Thr-92, Arg-103, and Asn-113 each contribute to the ATP site. Catalysis depends on His-116, which acts as the Pros-phosphohistidine intermediate.

This sequence belongs to the NDK family. As to quaternary structure, homotetramer. It depends on Mg(2+) as a cofactor.

The protein localises to the cytoplasm. The catalysed reaction is a 2'-deoxyribonucleoside 5'-diphosphate + ATP = a 2'-deoxyribonucleoside 5'-triphosphate + ADP. It catalyses the reaction a ribonucleoside 5'-diphosphate + ATP = a ribonucleoside 5'-triphosphate + ADP. Its function is as follows. Major role in the synthesis of nucleoside triphosphates other than ATP. The ATP gamma phosphate is transferred to the NDP beta phosphate via a ping-pong mechanism, using a phosphorylated active-site intermediate. The sequence is that of Nucleoside diphosphate kinase from Phenylobacterium zucineum (strain HLK1).